The following is a 371-amino-acid chain: Chemerin-like receptor 1 (371 aa).

Topologically, residues 1–39 (MEYDAYNDSGIYDDEYSDGFGYFVDLEEASPWEAKVAPV) are extracellular. N-linked (GlcNAc...) asparagine glycosylation occurs at asparagine 7. A helical membrane pass occupies residues 40-62 (FLVVIYSLVCFLGLLGNGLVIVI). Residues 63 to 73 (ATFKMKKTVNT) are Cytoplasmic-facing. A helical membrane pass occupies residues 74 to 95 (VWFVNLAVADFLFNIFLPMHIT). At 96–112 (YAAMDYHWVFGKAMCKI) the chain is on the extracellular side. A disulfide bridge links cysteine 110 with cysteine 187. A helical transmembrane segment spans residues 113–133 (SNFLLSHNMYTSVFLLTVISF). Over 134-152 (DRCISVLLPVWSQNHRSIR) the chain is Cytoplasmic. The helical transmembrane segment at 153-174 (LAYMTCSAVWVLAFFLSSPSLV) threads the bilayer. Topologically, residues 175-222 (FRDTANIHGKITCFNNFSLAAPESSPHPAHSQVVSTGYSRHVAVTVTR) are extracellular. An N-linked (GlcNAc...) asparagine glycan is attached at asparagine 190. The chain crosses the membrane as a helical span at residues 223–243 (FLCGFLIPVFIITACYLTIVF). Residues 244–259 (KLQRNRLAKNKKPFKI) are Cytoplasmic-facing. A helical membrane pass occupies residues 260-280 (IITIIITFFLCWCPYHTLYLL). The Extracellular segment spans residues 281-298 (ELHHTAVPSSVFSLGLPL). Residues 299–318 (ATAVAIANSCMNPILYVFMG) form a helical membrane-spanning segment. At 319 to 371 (HDFRKFKVALFSRLANALSEDTGPSSYPSHRSFTKMSSLNEKASVNEKETSTL) the chain is on the cytoplasmic side. Serine 337 is subject to Phosphoserine. Phosphothreonine is present on threonine 340. Residues serine 347, serine 350, and serine 356 each carry the phosphoserine modification. The residue at position 370 (threonine 370) is a Phosphothreonine.

It belongs to the chemokine-like receptor (CMKLR) family. As to expression, expressed in the differentiated adipocytes (at protein level). Ubiquitous. Highly expressed in adipose tissue and immature plasmacytoid dendritic cells (DCs) and at lower levels in myeloid DCs, macrophages, and NK cells. Expressed on macrophages isolated from different tissues, including peritoneal cavities, pleural cavities and spleen.

The protein resides in the cell membrane. Receptor for the chemoattractant adipokine chemerin/RARRES2 and for the omega-3 fatty acid derived molecule resolvin E1. Interaction with RARRES2 initiates activation of G proteins G(i)/G(o) and beta-arrestin pathways inducing cellular responses via second messenger pathways such as intracellular calcium mobilization, phosphorylation of MAP kinases MAPK1/MAPK3 (ERK1/2), TYRO3, MAPK14/P38MAPK and PI3K leading to multifunctional effects, like, reduction of immune responses, enhancing of adipogenesis and angionesis. Resolvin E1 down-regulates cytokine production in macrophages by reducing the activation of MAPK1/3 (ERK1/2) and NF-kappa-B. Positively regulates adipogenesis and adipocyte metabolism. This Mus musculus (Mouse) protein is Chemerin-like receptor 1 (Cmklr1).